Here is a 567-residue protein sequence, read N- to C-terminus: Proline--tRNA ligase (567 aa).

Belongs to the class-II aminoacyl-tRNA synthetase family. ProS type 1 subfamily. In terms of assembly, homodimer.

It is found in the cytoplasm. It carries out the reaction tRNA(Pro) + L-proline + ATP = L-prolyl-tRNA(Pro) + AMP + diphosphate. Functionally, catalyzes the attachment of proline to tRNA(Pro) in a two-step reaction: proline is first activated by ATP to form Pro-AMP and then transferred to the acceptor end of tRNA(Pro). As ProRS can inadvertently accommodate and process non-cognate amino acids such as alanine and cysteine, to avoid such errors it has two additional distinct editing activities against alanine. One activity is designated as 'pretransfer' editing and involves the tRNA(Pro)-independent hydrolysis of activated Ala-AMP. The other activity is designated 'posttransfer' editing and involves deacylation of mischarged Ala-tRNA(Pro). The misacylated Cys-tRNA(Pro) is not edited by ProRS. The polypeptide is Proline--tRNA ligase (Staphylococcus aureus (strain Mu3 / ATCC 700698)).